The following is a 763-amino-acid chain: Transferrin receptor protein 1 (763 aa).

At 1–67 (MMDQARSAFS…KPKRFNGRLC (67 aa)) the chain is on the cytoplasmic side. The segment at 1-67 (MMDQARSAFS…KPKRFNGRLC (67 aa)) is mediates interaction with SH3BP4. Phosphoserine is present on residues serine 10 and serine 19. Position 20 is a phosphotyrosine (tyrosine 20). An Endocytosis signal motif is present at residues 20–23 (YTRF). Phosphothreonine is present on threonine 21. Serine 24 carries the phosphoserine modification. The Stop-transfer sequence signature appears at 58 to 61 (KPKR). Cysteine 67 carries S-palmitoyl cysteine lipidation. The chain crosses the membrane as a helical; Signal-anchor for type II membrane protein span at residues 68–88 (FAAIALVIFFLIGFMSGYLGY). The Extracellular segment spans residues 89-763 (CKRVEQKEEC…GDIWNIDNEF (675 aa)). O-linked (GalNAc...) threonine glycosylation occurs at threonine 104. The region spanning 225 to 315 (SKPTEVSGKL…GTGDPYTPGF (91 aa)) is the PA domain. N-linked (GlcNAc...) asparagine glycosylation is found at asparagine 253 and asparagine 319. The ligand-binding stretch occupies residues 572–763 (RLDTYEALTQ…GDIWNIDNEF (192 aa)). The short motif at 649 to 651 (RGD) is the Cell attachment site element. Residues asparagine 725 and asparagine 730 are each glycosylated (N-linked (GlcNAc...) asparagine).

Belongs to the peptidase M28 family. M28B subfamily. Homodimer; disulfide-linked. Binds one transferrin molecule per subunit. Interacts with SH3BP4. Interacts with STEAP3; facilitates TFRC endocytosis in erythroid precursor cells. Stearoylated by ZDHHC6 which inhibits TFRC-mediated activation of the JNK pathway and promotes mitochondrial fragmentation. Stearoylation does not affect iron uptake. In terms of processing, N- and O-glycosylated, phosphorylated and palmitoylated.

It is found in the cell membrane. Its subcellular location is the melanosome. Its function is as follows. Cellular uptake of iron occurs via receptor-mediated endocytosis of ligand-occupied transferrin receptor into specialized endosomes. Endosomal acidification leads to iron release. The apotransferrin-receptor complex is then recycled to the cell surface with a return to neutral pH and the concomitant loss of affinity of apotransferrin for its receptor. Transferrin receptor is necessary for development of erythrocytes and the nervous system. Upon stimulation, positively regulates T and B cell proliferation through iron uptake. Acts as a lipid sensor that regulates mitochondrial fusion by regulating activation of the JNK pathway. When dietary levels of stearate (C18:0) are low, promotes activation of the JNK pathway, resulting in HUWE1-mediated ubiquitination and subsequent degradation of the mitofusin MFN2 and inhibition of mitochondrial fusion. When dietary levels of stearate (C18:0) are high, TFRC stearoylation inhibits activation of the JNK pathway and thus degradation of the mitofusin MFN2. Mediates uptake of NICOL1 into fibroblasts where it may regulate extracellular matrix production. The protein is Transferrin receptor protein 1 (Tfrc) of Mus musculus (Mouse).